The following is a 271-amino-acid chain: Low choriolytic enzyme (271 aa).

The first 20 residues, 1–20 (MDLLAKASVLLLLLLSLSNA), serve as a signal peptide directing secretion. Residues 21-71 (QTDNMEEAENGSSKEEIDESELEDVSSIIFRMNNNSMEELLEGDLVLPKTR) constitute a propeptide, activation peptide. N-linked (GlcNAc...) asparagine glycans are attached at residues N30 and N54. Residues 72–271 (NAMKCFGAPD…ILRVNKLYKC (200 aa)) form the Peptidase M12A domain. Disulfide bonds link C76–C83, C123–C271, and C144–C164. Zn(2+) is bound at residue H172. The active site involves E173. Zn(2+)-binding residues include H176 and H182. N211 carries an N-linked (GlcNAc...) asparagine glycan.

Requires Zn(2+) as cofactor.

It localises to the zymogen granule. The catalysed reaction is Hydrolysis of the inner layer of fish egg envelope. Also hydrolysis of casein and small molecule substrates such as succinyl-Leu-Leu-Val-Tyr-|-7-(4-methyl)coumarylamide.. Its function is as follows. Participates in the breakdown of the egg envelope, which is derived from the egg extracellular matrix, at the time of hatching. Thus allowing the newly hatched fish to swim free. LCE solubilizes the egg envelope only after it has been swollen by the action of HCE. The chain is Low choriolytic enzyme (lce) from Oryzias latipes (Japanese rice fish).